The following is a 513-amino-acid chain: ATP synthase subunit alpha (513 aa).

169-176 (GDRQTGKT) lines the ATP pocket.

It belongs to the ATPase alpha/beta chains family. In terms of assembly, F-type ATPases have 2 components, CF(1) - the catalytic core - and CF(0) - the membrane proton channel. CF(1) has five subunits: alpha(3), beta(3), gamma(1), delta(1), epsilon(1). CF(0) has three main subunits: a(1), b(2) and c(9-12). The alpha and beta chains form an alternating ring which encloses part of the gamma chain. CF(1) is attached to CF(0) by a central stalk formed by the gamma and epsilon chains, while a peripheral stalk is formed by the delta and b chains.

The protein localises to the cell inner membrane. The catalysed reaction is ATP + H2O + 4 H(+)(in) = ADP + phosphate + 5 H(+)(out). Functionally, produces ATP from ADP in the presence of a proton gradient across the membrane. The alpha chain is a regulatory subunit. In Dichelobacter nodosus (strain VCS1703A), this protein is ATP synthase subunit alpha.